Reading from the N-terminus, the 280-residue chain is Formamidopyrimidine-DNA glycosylase (280 aa).

The active-site Schiff-base intermediate with DNA is the proline 2. The Proton donor role is filled by glutamate 3. The Proton donor; for beta-elimination activity role is filled by lysine 59. DNA contacts are provided by histidine 92 and arginine 111. The FPG-type zinc finger occupies 239–273 (NVYGQTGLPCNRCGTPIVKTKVAQRGTHYCPQCQQ). Catalysis depends on arginine 263, which acts as the Proton donor; for delta-elimination activity.

The protein belongs to the FPG family. As to quaternary structure, monomer. Zn(2+) serves as cofactor.

It catalyses the reaction Hydrolysis of DNA containing ring-opened 7-methylguanine residues, releasing 2,6-diamino-4-hydroxy-5-(N-methyl)formamidopyrimidine.. It carries out the reaction 2'-deoxyribonucleotide-(2'-deoxyribose 5'-phosphate)-2'-deoxyribonucleotide-DNA = a 3'-end 2'-deoxyribonucleotide-(2,3-dehydro-2,3-deoxyribose 5'-phosphate)-DNA + a 5'-end 5'-phospho-2'-deoxyribonucleoside-DNA + H(+). Involved in base excision repair of DNA damaged by oxidation or by mutagenic agents. Acts as a DNA glycosylase that recognizes and removes damaged bases. Has a preference for oxidized purines, such as 7,8-dihydro-8-oxoguanine (8-oxoG). Has AP (apurinic/apyrimidinic) lyase activity and introduces nicks in the DNA strand. Cleaves the DNA backbone by beta-delta elimination to generate a single-strand break at the site of the removed base with both 3'- and 5'-phosphates. The chain is Formamidopyrimidine-DNA glycosylase from Enterococcus faecalis (strain ATCC 700802 / V583).